Here is a 141-residue protein sequence, read N- to C-terminus: MAKKVVAVVKLQIPAGKATPAPPVGPALGQHGVNIMAFVKEYNERTAQQAGMIIPVEITVYEDRSFTFVTKTPPASDLLKKAAGIESGSGQPNKKKVGKVTRAKIREIAELKLKDLNANDVEAAMRMIEGTARSMGIEVVD.

Belongs to the universal ribosomal protein uL11 family. As to quaternary structure, part of the ribosomal stalk of the 50S ribosomal subunit. Interacts with L10 and the large rRNA to form the base of the stalk. L10 forms an elongated spine to which L12 dimers bind in a sequential fashion forming a multimeric L10(L12)X complex. One or more lysine residues are methylated.

Functionally, forms part of the ribosomal stalk which helps the ribosome interact with GTP-bound translation factors. This Carboxydothermus hydrogenoformans (strain ATCC BAA-161 / DSM 6008 / Z-2901) protein is Large ribosomal subunit protein uL11.